The primary structure comprises 238 residues: Ribosomal RNA small subunit methyltransferase G (238 aa).

S-adenosyl-L-methionine is bound by residues Gly77, Phe82, 128-129 (AE), and Arg147.

Belongs to the methyltransferase superfamily. RNA methyltransferase RsmG family.

It is found in the cytoplasm. Its function is as follows. Specifically methylates the N7 position of guanine in position 535 of 16S rRNA. This chain is Ribosomal RNA small subunit methyltransferase G, found in Geobacillus sp. (strain WCH70).